A 363-amino-acid chain; its full sequence is MRVSDFYFDLPDELIARYPKPDRTASRLLQLNGENGEITHRTFADILDQIHEGDLLIFNNTRVIPARMFGRKASGGKVEVLVERILSDTRFLAHVRSSKAPKEGAELWLGEDKLGEHHGVKMIMVARHDTLFELEIAQKQTALLDVLQQIGHMPLPPYIDRPDEEADKERYQTVYNKVPGAVAAPTAGLHFDDALLAQLKAKGVNFAFVTLHVGAGTFQPVRVEQIEDHKMHAEYVEVPQEVCDAIIATKQAGKRVIAVGTTSVRSVESAALATEEKGEHALITPYFSDTSIFIYPGKTFRVVDCLITNFHLPESTLIMLVSAFAGYRHTMQAYQSAVENRYRFFSYGDAMFISKNPHVNGLD.

It belongs to the QueA family. Monomer.

The protein resides in the cytoplasm. The catalysed reaction is 7-aminomethyl-7-carbaguanosine(34) in tRNA + S-adenosyl-L-methionine = epoxyqueuosine(34) in tRNA + adenine + L-methionine + 2 H(+). Its pathway is tRNA modification; tRNA-queuosine biosynthesis. In terms of biological role, transfers and isomerizes the ribose moiety from AdoMet to the 7-aminomethyl group of 7-deazaguanine (preQ1-tRNA) to give epoxyqueuosine (oQ-tRNA). This chain is S-adenosylmethionine:tRNA ribosyltransferase-isomerase, found in Pasteurella multocida (strain Pm70).